We begin with the raw amino-acid sequence, 189 residues long: Pyridoxal 5'-phosphate synthase subunit PdxT (189 aa).

52 to 54 (GES) serves as a coordination point for L-glutamine. Cys81 functions as the Nucleophile in the catalytic mechanism. L-glutamine-binding positions include Arg108 and 136–137 (IR). Active-site charge relay system residues include His172 and Glu174.

Belongs to the glutaminase PdxT/SNO family. As to quaternary structure, in the presence of PdxS, forms a dodecamer of heterodimers. Only shows activity in the heterodimer.

The catalysed reaction is aldehydo-D-ribose 5-phosphate + D-glyceraldehyde 3-phosphate + L-glutamine = pyridoxal 5'-phosphate + L-glutamate + phosphate + 3 H2O + H(+). It catalyses the reaction L-glutamine + H2O = L-glutamate + NH4(+). The protein operates within cofactor biosynthesis; pyridoxal 5'-phosphate biosynthesis. Catalyzes the hydrolysis of glutamine to glutamate and ammonia as part of the biosynthesis of pyridoxal 5'-phosphate. The resulting ammonia molecule is channeled to the active site of PdxS. In Haemophilus ducreyi (strain 35000HP / ATCC 700724), this protein is Pyridoxal 5'-phosphate synthase subunit PdxT.